A 676-amino-acid polypeptide reads, in one-letter code: Zinc finger CCCH domain-containing protein 38 (676 aa).

5 disordered regions span residues 1-134, 172-217, 245-307, 487-506, and 533-594; these read MEMS…DHLF, SSDY…RSSN, RKQP…SWID, SVQP…NPNQ, and IQEV…DPKG. Positions 12 to 21 are enriched in basic and acidic residues; it reads SKWDSKEDTH. The span at 58–79 shows a compositional bias: polar residues; that stretch reads RVSQNNDNSYFSEQDGTRQQFV. Composition is skewed to basic and acidic residues over residues 101 to 110, 124 to 134, and 192 to 212; these read ARRDAGSYDR, EFNKRGSDHLF, and SEFT…EGGF. A C3H1-type zinc finger spans residues 214–243; sequence RSSNIPCKFFAAGTGFCRNGKYCRFSHHVA. The segment covering 251–262 has biased composition (low complexity); it reads NNNNFYRQDNNN. The segment covering 269–278 has biased composition (basic and acidic residues); sequence KWNDVERLDN. Basic and acidic residues predominate over residues 538–562; that stretch reads LDPKENGDKKTDEASKEEEGKKTGE. The span at 563-583 shows a compositional bias: acidic residues; it reads DTNDAENVVDEDEDGDDDGSD. Residues 584–594 are compositionally biased toward basic and acidic residues; that stretch reads EENKKEKDPKG.

The protein is Zinc finger CCCH domain-containing protein 38 of Arabidopsis thaliana (Mouse-ear cress).